We begin with the raw amino-acid sequence, 516 residues long: GMP synthase [glutamine-hydrolyzing] (516 aa).

One can recognise a Glutamine amidotransferase type-1 domain in the interval 8 to 198; that stretch reads KILILDFGSQ…VVNICGCDTL (191 aa). Cys84 (nucleophile) is an active-site residue. Residues His172 and Glu174 contribute to the active site. The 193-residue stretch at 199-391 folds into the GMPS ATP-PPase domain; the sequence is WNIENIIEND…LGLPYNMLYR (193 aa). 226 to 232 is an ATP binding site; sequence SGGVDSS.

Homodimer.

It carries out the reaction XMP + L-glutamine + ATP + H2O = GMP + L-glutamate + AMP + diphosphate + 2 H(+). It participates in purine metabolism; GMP biosynthesis; GMP from XMP (L-Gln route): step 1/1. In terms of biological role, catalyzes the synthesis of GMP from XMP. The protein is GMP synthase [glutamine-hydrolyzing] of Francisella tularensis subsp. novicida (strain U112).